The following is a 339-amino-acid chain: uncharacterized protein (339 aa).

2 VOC domains span residues 2–127 (EFDY…VRSE) and 141–276 (TIDH…CLEI). Positions 144, 222, and 306 each coordinate Fe cation.

It belongs to the 4HPPD family. The cofactor is Fe cation.

This is an uncharacterized protein from Synechocystis sp. (strain ATCC 27184 / PCC 6803 / Kazusa).